The primary structure comprises 180 residues: Large ribosomal subunit protein uL5 (180 aa).

It belongs to the universal ribosomal protein uL5 family. Part of the 50S ribosomal subunit; part of the 5S rRNA/L5/L18/L25 subcomplex. Contacts the 5S rRNA and the P site tRNA. Forms a bridge to the 30S subunit in the 70S ribosome.

This is one of the proteins that bind and probably mediate the attachment of the 5S RNA into the large ribosomal subunit, where it forms part of the central protuberance. In the 70S ribosome it contacts protein S13 of the 30S subunit (bridge B1b), connecting the 2 subunits; this bridge is implicated in subunit movement. Contacts the P site tRNA; the 5S rRNA and some of its associated proteins might help stabilize positioning of ribosome-bound tRNAs. In Chlamydia trachomatis serovar A (strain ATCC VR-571B / DSM 19440 / HAR-13), this protein is Large ribosomal subunit protein uL5.